The following is a 375-amino-acid chain: Chaperone protein DnaJ (375 aa).

Residues 5–70 (DYYEVLGVER…GKRMAYDQYG (66 aa)) form the J domain. The segment at 134–212 (GTTVTIRVPT…CHGQGRVEEH (79 aa)) adopts a CR-type zinc-finger fold. Positions 147, 150, 164, 167, 186, 189, 200, and 203 each coordinate Zn(2+). 4 CXXCXGXG motif repeats span residues 147-154 (CKTCDGSG), 164-171 (CTTCGGIG), 186-193 (CPRCHGSG), and 200-207 (CPDCHGQG).

It belongs to the DnaJ family. As to quaternary structure, homodimer. Zn(2+) serves as cofactor.

It is found in the cytoplasm. Functionally, participates actively in the response to hyperosmotic and heat shock by preventing the aggregation of stress-denatured proteins and by disaggregating proteins, also in an autonomous, DnaK-independent fashion. Unfolded proteins bind initially to DnaJ; upon interaction with the DnaJ-bound protein, DnaK hydrolyzes its bound ATP, resulting in the formation of a stable complex. GrpE releases ADP from DnaK; ATP binding to DnaK triggers the release of the substrate protein, thus completing the reaction cycle. Several rounds of ATP-dependent interactions between DnaJ, DnaK and GrpE are required for fully efficient folding. Also involved, together with DnaK and GrpE, in the DNA replication of plasmids through activation of initiation proteins. This Azotobacter vinelandii (strain DJ / ATCC BAA-1303) protein is Chaperone protein DnaJ.